The primary structure comprises 249 residues: Large ribosomal subunit protein uL16m (249 aa).

The protein belongs to the universal ribosomal protein uL16 family. In terms of assembly, component of the mitochondrial large ribosomal subunit (mt-LSU). Mature N.crassa 74S mitochondrial ribosomes consist of a small (37S) and a large (54S) subunit. The 37S small subunit contains a 16S ribosomal RNA (16S mt-rRNA) and 32 different proteins. The 54S large subunit contains a 23S rRNA (23S mt-rRNA) and 42 different proteins.

The protein localises to the mitochondrion. In terms of biological role, component of the mitochondrial ribosome (mitoribosome), a dedicated translation machinery responsible for the synthesis of mitochondrial genome-encoded proteins, including at least some of the essential transmembrane subunits of the mitochondrial respiratory chain. The mitoribosomes are attached to the mitochondrial inner membrane and translation products are cotranslationally integrated into the membrane. In Neurospora crassa (strain ATCC 24698 / 74-OR23-1A / CBS 708.71 / DSM 1257 / FGSC 987), this protein is Large ribosomal subunit protein uL16m (mrpl16).